The following is a 378-amino-acid chain: MNAPTTVADSVTVPVSLGDRSYDILIGKGLVERAGEEVAKRLKGVRVAIVTDENVAAVHLERLQASFARAGIDSTPVIVAPGEKSKSFATLETVTNAILAAKLERGDAVVALGGGVVGDLSGFVAGIVRRGMNFVQMPTSLLAQVDSSVGGKTGINTAHGKNLVGVFNQPQLVLADTQVLDTLSPREFRAGYAEIAKYGLIDRPDFFAWLEANWQEVFSGGAARTKAIAESCRSKAAVVARDERETGDRALLNLGHTFGHALESATGYDSSRLVHGEGVAIGMALAYRFSARMNLAGIEAAERVEAHLKAVGLPVSLAEVPGGLPPAEKLMDYIAQDKKVTRGTLTFILTHGIGQSFIAKDVPPAAVLEFLKERLAIA.

NAD(+)-binding positions include 115 to 119, 139 to 140, Lys-152, and Lys-161; these read GVVGD and TS. Positions 194, 256, and 275 each coordinate Zn(2+).

This sequence belongs to the sugar phosphate cyclases superfamily. Dehydroquinate synthase family. It depends on Co(2+) as a cofactor. Zn(2+) is required as a cofactor. Requires NAD(+) as cofactor.

The protein localises to the cytoplasm. It carries out the reaction 7-phospho-2-dehydro-3-deoxy-D-arabino-heptonate = 3-dehydroquinate + phosphate. It functions in the pathway metabolic intermediate biosynthesis; chorismate biosynthesis; chorismate from D-erythrose 4-phosphate and phosphoenolpyruvate: step 2/7. Functionally, catalyzes the conversion of 3-deoxy-D-arabino-heptulosonate 7-phosphate (DAHP) to dehydroquinate (DHQ). This Brucella suis (strain ATCC 23445 / NCTC 10510) protein is 3-dehydroquinate synthase.